Here is a 963-residue protein sequence, read N- to C-terminus: Isoleucine--tRNA ligase (963 aa).

The 'HIGH' region motif lies at 66-76; that stretch reads PYANGDIHIGH. Residue E596 coordinates L-isoleucyl-5'-AMP. Positions 637-641 match the 'KMSKS' region motif; that stretch reads KMSKS. Residue K640 coordinates ATP. Zn(2+) contacts are provided by C926, C929, C946, and C949.

It belongs to the class-I aminoacyl-tRNA synthetase family. IleS type 1 subfamily. As to quaternary structure, monomer. It depends on Zn(2+) as a cofactor.

It is found in the cytoplasm. The catalysed reaction is tRNA(Ile) + L-isoleucine + ATP = L-isoleucyl-tRNA(Ile) + AMP + diphosphate. In terms of biological role, catalyzes the attachment of isoleucine to tRNA(Ile). As IleRS can inadvertently accommodate and process structurally similar amino acids such as valine, to avoid such errors it has two additional distinct tRNA(Ile)-dependent editing activities. One activity is designated as 'pretransfer' editing and involves the hydrolysis of activated Val-AMP. The other activity is designated 'posttransfer' editing and involves deacylation of mischarged Val-tRNA(Ile). In Cupriavidus pinatubonensis (strain JMP 134 / LMG 1197) (Cupriavidus necator (strain JMP 134)), this protein is Isoleucine--tRNA ligase.